Consider the following 159-residue polypeptide: NADH-quinone oxidoreductase subunit I (159 aa).

2 4Fe-4S ferredoxin-type domains span residues Arg-51 to Asp-80 and Thr-90 to Asn-119. Residues Cys-60, Cys-63, Cys-66, Cys-70, Cys-99, Cys-102, Cys-105, and Cys-109 each coordinate [4Fe-4S] cluster.

This sequence belongs to the complex I 23 kDa subunit family. As to quaternary structure, NDH-1 is composed of 14 different subunits. Subunits NuoA, H, J, K, L, M, N constitute the membrane sector of the complex. [4Fe-4S] cluster serves as cofactor.

It is found in the cell inner membrane. The catalysed reaction is a quinone + NADH + 5 H(+)(in) = a quinol + NAD(+) + 4 H(+)(out). In terms of biological role, NDH-1 shuttles electrons from NADH, via FMN and iron-sulfur (Fe-S) centers, to quinones in the respiratory chain. The immediate electron acceptor for the enzyme in this species is believed to be ubiquinone. Couples the redox reaction to proton translocation (for every two electrons transferred, four hydrogen ions are translocated across the cytoplasmic membrane), and thus conserves the redox energy in a proton gradient. In Rickettsia akari (strain Hartford), this protein is NADH-quinone oxidoreductase subunit I.